Reading from the N-terminus, the 158-residue chain is NAD(P)H-quinone oxidoreductase subunit N (158 aa).

This sequence belongs to the complex I NdhN subunit family. As to quaternary structure, NDH-1 can be composed of about 15 different subunits; different subcomplexes with different compositions have been identified which probably have different functions.

The protein localises to the cellular thylakoid membrane. It carries out the reaction a plastoquinone + NADH + (n+1) H(+)(in) = a plastoquinol + NAD(+) + n H(+)(out). It catalyses the reaction a plastoquinone + NADPH + (n+1) H(+)(in) = a plastoquinol + NADP(+) + n H(+)(out). Functionally, NDH-1 shuttles electrons from an unknown electron donor, via FMN and iron-sulfur (Fe-S) centers, to quinones in the respiratory and/or the photosynthetic chain. The immediate electron acceptor for the enzyme in this species is believed to be plastoquinone. Couples the redox reaction to proton translocation, and thus conserves the redox energy in a proton gradient. Cyanobacterial NDH-1 also plays a role in inorganic carbon-concentration. This chain is NAD(P)H-quinone oxidoreductase subunit N, found in Synechococcus elongatus (strain ATCC 33912 / PCC 7942 / FACHB-805) (Anacystis nidulans R2).